A 139-amino-acid chain; its full sequence is Large ribosomal subunit protein uL16 (139 aa).

Belongs to the universal ribosomal protein uL16 family. Part of the 50S ribosomal subunit.

Functionally, binds 23S rRNA and is also seen to make contacts with the A and possibly P site tRNAs. In Treponema pallidum (strain Nichols), this protein is Large ribosomal subunit protein uL16.